We begin with the raw amino-acid sequence, 259 residues long: Ribose-5-phosphate isomerase (259 aa).

This sequence belongs to the ribose 5-phosphate isomerase family.

It is found in the cytoplasm. It catalyses the reaction aldehydo-D-ribose 5-phosphate = D-ribulose 5-phosphate. Its pathway is carbohydrate degradation; pentose phosphate pathway; D-ribose 5-phosphate from D-ribulose 5-phosphate (non-oxidative stage): step 1/1. The protein is Ribose-5-phosphate isomerase (RKI1) of Vanderwaltozyma polyspora (strain ATCC 22028 / DSM 70294 / BCRC 21397 / CBS 2163 / NBRC 10782 / NRRL Y-8283 / UCD 57-17) (Kluyveromyces polysporus).